The chain runs to 93 residues: Photosystem I iron-sulfur center (93 aa).

4Fe-4S ferredoxin-type domains follow at residues 13–43 (KDHE…MVPS) and 50–80 (QVVT…IRVY). Positions 23, 26, 29, 33, 60, 63, 66, and 70 each coordinate [4Fe-4S] cluster.

As to quaternary structure, the eukaryotic PSI reaction center is composed of at least 11 subunits. Requires [4Fe-4S] cluster as cofactor.

Its subcellular location is the plastid. The protein resides in the chloroplast thylakoid membrane. It catalyses the reaction reduced [plastocyanin] + hnu + oxidized [2Fe-2S]-[ferredoxin] = oxidized [plastocyanin] + reduced [2Fe-2S]-[ferredoxin]. Apoprotein for the two 4Fe-4S centers FA and FB of photosystem I (PSI); essential for photochemical activity. FB is the terminal electron acceptor of PSI, donating electrons to ferredoxin. The C-terminus interacts with PsaA/B/D and helps assemble the protein into the PSI complex. Required for binding of PsaD and PsaE to PSI. PSI is a plastocyanin-ferredoxin oxidoreductase, converting photonic excitation into a charge separation, which transfers an electron from the donor P700 chlorophyll pair to the spectroscopically characterized acceptors A0, A1, FX, FA and FB in turn. The protein is Photosystem I iron-sulfur center of Bigelowiella natans (Pedinomonas minutissima).